The primary structure comprises 214 residues: Large ribosomal subunit protein uL3 (214 aa).

Positions 132–145 (SNRASHGNSVTTRA) are enriched in polar residues. Residues 132–155 (SNRASHGNSVTTRAPGSIGQAQDP) form a disordered region. Residue Q153 is modified to N5-methylglutamine.

The protein belongs to the universal ribosomal protein uL3 family. In terms of assembly, part of the 50S ribosomal subunit. Forms a cluster with proteins L14 and L19. Methylated by PrmB.

Functionally, one of the primary rRNA binding proteins, it binds directly near the 3'-end of the 23S rRNA, where it nucleates assembly of the 50S subunit. The polypeptide is Large ribosomal subunit protein uL3 (Laribacter hongkongensis (strain HLHK9)).